Reading from the N-terminus, the 513-residue chain is GMP synthase [glutamine-hydrolyzing] (513 aa).

The Glutamine amidotransferase type-1 domain maps to 3-200; it reads SVLVLDFGSQ…LIDIAGITPD (198 aa). The Nucleophile role is filled by Cys80. Residues His174 and Glu176 contribute to the active site. The GMPS ATP-PPase domain occupies 201–388; it reads WSPKHFIDHQ…LGIAEDILMR (188 aa). 228–234 is a binding site for ATP; that stretch reads SGGVDSS.

Homodimer.

It carries out the reaction XMP + L-glutamine + ATP + H2O = GMP + L-glutamate + AMP + diphosphate + 2 H(+). Its pathway is purine metabolism; GMP biosynthesis; GMP from XMP (L-Gln route): step 1/1. In terms of biological role, catalyzes the synthesis of GMP from XMP. In Chlorobium limicola (strain DSM 245 / NBRC 103803 / 6330), this protein is GMP synthase [glutamine-hydrolyzing].